Reading from the N-terminus, the 1158-residue chain is ATP-dependent helicase/deoxyribonuclease subunit B (1158 aa).

One can recognise a UvrD-like helicase ATP-binding domain in the interval 1 to 275; sequence MTLHAYLGRA…QYFNQLYRFN (275 aa). Position 8-15 (8-15) interacts with ATP; it reads GRAGTGKS. Residues 269–583 form the UvrD-like helicase C-terminal domain; the sequence is NQLYRFNNQD…SIGTMDLAKV (315 aa). The [4Fe-4S] cluster site is built by Cys784, Cys1112, Cys1115, and Cys1121.

The protein belongs to the helicase family. AddB/RexB type 1 subfamily. In terms of assembly, heterodimer of AddA and AddB. It depends on Mg(2+) as a cofactor. Requires [4Fe-4S] cluster as cofactor.

Functionally, the heterodimer acts as both an ATP-dependent DNA helicase and an ATP-dependent, dual-direction single-stranded exonuclease. Recognizes the chi site generating a DNA molecule suitable for the initiation of homologous recombination. The AddB subunit has 5' -&gt; 3' nuclease activity but not helicase activity. This Staphylococcus aureus (strain MSSA476) protein is ATP-dependent helicase/deoxyribonuclease subunit B.